A 255-amino-acid polypeptide reads, in one-letter code: Small ribosomal subunit protein uS2 (255 aa).

This sequence belongs to the universal ribosomal protein uS2 family.

The polypeptide is Small ribosomal subunit protein uS2 (Streptococcus pyogenes serotype M28 (strain MGAS6180)).